The primary structure comprises 211 residues: BAG family molecular chaperone regulator 2 (211 aa).

Residue A2 is modified to N-acetylalanine. S20, S31, and S73 each carry phosphoserine. Residues 20 to 61 (SMADRSSRLLESLDQLELRVEALREAATAVEQEKEVLLEMIH) adopt a coiled-coil conformation. Residues 109 to 189 (SLKHATRIID…NIENADKAIK (81 aa)) enclose the BAG domain.

Binds to the ATPase domain of HSP/HSC70 chaperones. May interact with NWD1. Interacts with HSPA1A (via NBD), HSPA1B (via NBD) and HSPA8. May interact with DNJC9; the interaction seems to be histone-dependent.

Co-chaperone for HSP70 and HSC70 chaperone proteins. Acts as a nucleotide-exchange factor (NEF) promoting the release of ADP from the HSP70 and HSC70 proteins thereby triggering client/substrate protein release. The polypeptide is BAG family molecular chaperone regulator 2 (Bos taurus (Bovine)).